The following is a 520-amino-acid chain: Endosomal/lysosomal proton channel TMEM175 (520 aa).

Residues 1-27 are disordered; that stretch reads MGENDESEIIEHHDDEEMEKRRPPRTH. The Cytoplasmic segment spans residues 1 to 49; that stretch reads MGENDESEIIEHHDDEEMEKRRPPRTHAQSFLESVASSVKEGHSSTQSS. Residues 9–21 show a composition bias toward basic and acidic residues; it reads IIEHHDDEEMEKR. The helical transmembrane segment at 50–72 threads the bilayer; sequence HRLLAYSDALISIIATVMILPVA. The RxxxFSD motif 1 motif lies at 51–57; that stretch reads RLLAYSD. At 73–93 the chain is on the lumenal side; the sequence is HTKIQEDEELKQSIQALLTTK. A short helix H1-1 region spans residues 74–79; it reads TKIQED. The segment at 81–87 is short helix H2-1; the sequence is ELKQSIQ. The chain crosses the membrane as a helical span at residues 94-116; it reads IAVYLMTFLIVTVAWAAHIRLFQ. The Cytoplasmic segment spans residues 117-122; it reads VIERID. The chain crosses the membrane as a helical span at residues 123-144; it reads DTLALLNLACMMLITFLPYTFS. Residues 145 to 154 lie on the Lumenal side of the membrane; the sequence is LMATFPNNIL. Residues 155–176 form a helical membrane-spanning segment; it reads GILLFCACVMVIGLIQALIVLY. The Cytoplasmic portion of the chain corresponds to 177 to 200; the sequence is GFSHPFLLNDQIQMSENQAYYKQH. Transmembrane regions (helical) follow at residues 201 to 221 and 222 to 242; these read ILKVIMRVPIMCLFASIFSFI and FFQLSYVLLAIVIFLPYISQC. The Cytoplasmic segment spans residues 243–274; it reads LKWIRSKAIGGQTDESPDSMPFYTYHPSEPLS. Residues 275 to 299 form a helical membrane-spanning segment; it reads KERVEAFSDGVFAIVATLLILDICE. Residues 277-283 carry the RxxxFSD motif 2 motif; that stretch reads RVEAFSD. The Lumenal segment spans residues 300–326; sequence GNVPDPSVVKKKFDNSLIAALQEYGPE. The segment at 305 to 313 is short helix H1-2; it reads PSVVKKKFD. The short helix H2-2 stretch occupies residues 315 to 321; that stretch reads SLIAALQ. A helical transmembrane segment spans residues 327–349; the sequence is YLAYFGSFVTVGLLWFVHHSLFL. Topologically, residues 350-355 are cytoplasmic; the sequence is HVTKAT. The helical transmembrane segment at 356–377 threads the bilayer; that stretch reads RLMGLFNTFSLAFVGGLPLAYQ. At 378–392 the chain is on the lumenal side; the sequence is LTHESPRGSRNELEA. A helical transmembrane segment spans residues 393–413; sequence VQISCVIIFFASLFQLAIWVT. The Cytoplasmic portion of the chain corresponds to 414 to 433; that stretch reads ALFTERETLHPYVRYGGREH. The helical transmembrane segment at 434 to 457 threads the bilayer; it reads TFMLAKLSLYPCVALGTFFITCIL. Residues 458–459 lie on the Lumenal side of the membrane; sequence SR. Residues 460-486 form a helical membrane-spanning segment; the sequence is FSAPIFHMMEICIPFAFLLLRLLVRVA. Residues 487–520 lie on the Cytoplasmic side of the membrane; it reads LALLRWLFCSARNDLERIPVEEEESRLPINDIVT.

This sequence belongs to the TMEM175 family. As to quaternary structure, homodimer.

The protein resides in the endosome membrane. Its subcellular location is the lysosome membrane. It carries out the reaction H(+)(in) = H(+)(out). The enzyme catalyses K(+)(in) = K(+)(out). Active at low pH (under pH 4.6): proton channel activity is activated by luminal side protons. Polyunsaturated fatty acids, such as arachidonic acid, also activate the channel activity. Proton-activated proton channel that catalyzes proton efflux from endosomes and lysosomes to maintain a steady-state pH. Activated at low pH (under pH 4.6) by luminal side protons: selectively mediates lysosomal proton release from lysosomes, eliciting a proton leak that balances V-ATPase activity to maintain pH homeostasis. Regulation of lumenal pH stability is required for autophagosome-lysosome fusion. Also acts as a potassium channel at higher pH, regulating potassium conductance in endosomes and lysosomes. In Danio rerio (Zebrafish), this protein is Endosomal/lysosomal proton channel TMEM175.